The chain runs to 242 residues: Uridylate kinase (242 aa).

An ATP-binding site is contributed by 11-14; the sequence is KLSG. The tract at residues 19–24 is involved in allosteric activation by GTP; the sequence is GEKGVG. Position 53 (Gly-53) interacts with UMP. Gly-54 and Arg-58 together coordinate ATP. UMP-binding positions include Asp-73 and 134–141; that span reads IGSPYFST. Residues Asn-162, Tyr-168, and Asp-171 each coordinate ATP.

It belongs to the UMP kinase family. Homohexamer.

The protein localises to the cytoplasm. The catalysed reaction is UMP + ATP = UDP + ADP. It functions in the pathway pyrimidine metabolism; CTP biosynthesis via de novo pathway; UDP from UMP (UMPK route): step 1/1. Its activity is regulated as follows. Allosterically activated by GTP. Inhibited by UTP. In terms of biological role, catalyzes the reversible phosphorylation of UMP to UDP. In Streptococcus pyogenes serotype M1, this protein is Uridylate kinase.